We begin with the raw amino-acid sequence, 235 residues long: MGLTSRPTPASRQPASPPPADPVLLPEPKRLGVLSRLAPEPMKVVLNWGRRYSLWVFNFGLACCAIEFIAASMARHDFIRLGVIPFAPGPRQADLMIVSGTVTDKMAPAVKRLYEQMPEPKYVISFGACSNCGGPYWDSYSVTKGVDQIIPVDVYVPGCPPRPEALLQGILKLQEKIARESLAERYATGATGGGPSTDALRSGLVAAPTAPGPTAPASTAPGPTAPAPTQDEERR.

Low complexity predominate over residues 1–14 (MGLTSRPTPASRQP). Residues 1-24 (MGLTSRPTPASRQPASPPPADPVL) are disordered. [4Fe-4S] cluster contacts are provided by Cys-63, Cys-64, Cys-129, and Cys-159. Residues 188–235 (TGATGGGPSTDALRSGLVAAPTAPGPTAPASTAPGPTAPAPTQDEERR) are disordered.

This sequence belongs to the complex I 20 kDa subunit family. NDH-1 is composed of 14 different subunits. Subunits NuoB, C, D, E, F, and G constitute the peripheral sector of the complex. It depends on [4Fe-4S] cluster as a cofactor.

It localises to the cell membrane. It carries out the reaction a quinone + NADH + 5 H(+)(in) = a quinol + NAD(+) + 4 H(+)(out). NDH-1 shuttles electrons from NADH, via FMN and iron-sulfur (Fe-S) centers, to quinones in the respiratory chain. The immediate electron acceptor for the enzyme in this species is believed to be a menaquinone. Couples the redox reaction to proton translocation (for every two electrons transferred, four hydrogen ions are translocated across the cytoplasmic membrane), and thus conserves the redox energy in a proton gradient. This is NADH-quinone oxidoreductase subunit B 2 from Streptomyces griseus subsp. griseus (strain JCM 4626 / CBS 651.72 / NBRC 13350 / KCC S-0626 / ISP 5235).